The chain runs to 205 residues: Glycerol-3-phosphate acyltransferase 1 (205 aa).

5 helical membrane-spanning segments follow: residues T7–L27, W52–V74, H78–F100, L125–F145, and A160–I180.

It belongs to the PlsY family. Probably interacts with PlsX.

The protein localises to the cell membrane. The catalysed reaction is an acyl phosphate + sn-glycerol 3-phosphate = a 1-acyl-sn-glycero-3-phosphate + phosphate. Its pathway is lipid metabolism; phospholipid metabolism. In terms of biological role, catalyzes the transfer of an acyl group from acyl-phosphate (acyl-PO(4)) to glycerol-3-phosphate (G3P) to form lysophosphatidic acid (LPA). This enzyme utilizes acyl-phosphate as fatty acyl donor, but not acyl-CoA or acyl-ACP. The chain is Glycerol-3-phosphate acyltransferase 1 from Lactobacillus acidophilus (strain ATCC 700396 / NCK56 / N2 / NCFM).